A 392-amino-acid polypeptide reads, in one-letter code: Major outer membrane protein P.IA (392 aa).

The signal sequence occupies residues 1 to 19 (MRKKLTALVLSALPLAAVA).

It belongs to the Gram-negative porin family. As to quaternary structure, homotrimer.

Its subcellular location is the cell outer membrane. Serves as a slightly cation selective porin. Major antigen on the gonococcal cell surface and it may have pathogenic properties in addition to its porin activity. The protein is Major outer membrane protein P.IA (porA) of Neisseria meningitidis serogroup B / serotype 15 (strain H44/76).